A 392-amino-acid polypeptide reads, in one-letter code: NADH-quinone oxidoreductase subunit D (392 aa).

Belongs to the complex I 49 kDa subunit family. In terms of assembly, NDH-1 is composed of 14 different subunits. Subunits NuoB, C, D, E, F, and G constitute the peripheral sector of the complex.

The protein resides in the cell inner membrane. It catalyses the reaction a quinone + NADH + 5 H(+)(in) = a quinol + NAD(+) + 4 H(+)(out). Functionally, NDH-1 shuttles electrons from NADH, via FMN and iron-sulfur (Fe-S) centers, to quinones in the respiratory chain. The immediate electron acceptor for the enzyme in this species is believed to be ubiquinone. Couples the redox reaction to proton translocation (for every two electrons transferred, four hydrogen ions are translocated across the cytoplasmic membrane), and thus conserves the redox energy in a proton gradient. The sequence is that of NADH-quinone oxidoreductase subunit D from Rhodospirillum rubrum (strain ATCC 11170 / ATH 1.1.1 / DSM 467 / LMG 4362 / NCIMB 8255 / S1).